Consider the following 156-residue polypeptide: Ribosomal RNA large subunit methyltransferase H (156 aa).

S-adenosyl-L-methionine is bound by residues Leu73, Gly104, and 123 to 128 (LSALTL).

Belongs to the RNA methyltransferase RlmH family. As to quaternary structure, homodimer.

Its subcellular location is the cytoplasm. It carries out the reaction pseudouridine(1915) in 23S rRNA + S-adenosyl-L-methionine = N(3)-methylpseudouridine(1915) in 23S rRNA + S-adenosyl-L-homocysteine + H(+). Its function is as follows. Specifically methylates the pseudouridine at position 1915 (m3Psi1915) in 23S rRNA. The sequence is that of Ribosomal RNA large subunit methyltransferase H from Erwinia tasmaniensis (strain DSM 17950 / CFBP 7177 / CIP 109463 / NCPPB 4357 / Et1/99).